Consider the following 125-residue polypeptide: MASRMGMVAIMSLFVYAIVVPTSVNANAWQTDDKPGVNRNMEMQQQQGGFIGHRPRLASFNRASNQEGDRKRTVPSGPNHKHNNIPSHTPHHPPSYVQALYEDDRTITSPGPSKSIGPPPLPDRY.

The signal sequence occupies residues Met-1–Ala-26. Residues Gln-45–Tyr-125 form a disordered region. A hydroxyproline mark is found at Pro-75 and Pro-78. Pro-78 carries O-linked (Ara...) hydroxyproline glycosylation.

The protein belongs to the CLV3/ESR signal peptide family. Post-translationally, the O-glycosylation (arabinosylation) of the hydroxyproline Pro-78 enhances binding affinity of the ESR3p peptide for its receptor. In terms of tissue distribution, seed endosperm.

Its subcellular location is the secreted. The protein resides in the extracellular space. In terms of biological role, extracellular signal peptide that regulates cell fate. This is CLAVATA3/ESR (CLE)-related protein ESR3 from Zea mays (Maize).